A 151-amino-acid chain; its full sequence is Transcriptional regulator MraZ (151 aa).

SpoVT-AbrB domains lie at A5–E52 and A81–A124.

The protein belongs to the MraZ family. In terms of assembly, forms oligomers.

It is found in the cytoplasm. The protein resides in the nucleoid. This Pseudomonas putida (strain W619) protein is Transcriptional regulator MraZ.